The chain runs to 509 residues: L-arabinose isomerase (509 aa).

Residues Glu-313, Glu-340, His-357, and His-456 each coordinate Mn(2+).

The protein belongs to the arabinose isomerase family. It depends on Mn(2+) as a cofactor.

The catalysed reaction is beta-L-arabinopyranose = L-ribulose. It participates in carbohydrate degradation; L-arabinose degradation via L-ribulose; D-xylulose 5-phosphate from L-arabinose (bacterial route): step 1/3. Functionally, catalyzes the conversion of L-arabinose to L-ribulose. The protein is L-arabinose isomerase of Phocaeicola vulgatus (strain ATCC 8482 / DSM 1447 / JCM 5826 / CCUG 4940 / NBRC 14291 / NCTC 11154) (Bacteroides vulgatus).